The following is a 163-amino-acid chain: Bacterial microcompartment assembly protein PduM (163 aa).

This sequence belongs to the PduM family. Interacts with shell protein PduK.

The protein resides in the bacterial microcompartment. It participates in polyol metabolism; 1,2-propanediol degradation. In terms of biological role, plays an essential role in assembly and/or stability of the bacterial microcompartment (BMC) dedicated to 1,2-propanediol (1,2-PD) degradation. Its function is as follows. Expression of a cosmid containing the full 21-gene pdu operon in E.coli allows E.coli to grow on 1,2-propanediol (1,2-PD) with the appearance of bacterial microcompartments (BMC) in its cytoplasm. Functionally, the 1,2-PD-specific bacterial microcompartment (BMC) concentrates low levels of 1,2-PD catabolic enzymes, concentrates volatile reaction intermediates thus enhancing pathway flux and keeps the level of toxic, mutagenic propionaldehyde low. This Citrobacter freundii protein is Bacterial microcompartment assembly protein PduM.